Here is a 207-residue protein sequence, read N- to C-terminus: Large ribosomal subunit protein uL4 (207 aa).

A disordered region spans residues 56–76; that stretch reads EVRGGGRKPWRQKGTGRARAG. Residues 60-71 show a composition bias toward basic residues; the sequence is GGRKPWRQKGTG.

This sequence belongs to the universal ribosomal protein uL4 family. In terms of assembly, part of the 50S ribosomal subunit.

One of the primary rRNA binding proteins, this protein initially binds near the 5'-end of the 23S rRNA. It is important during the early stages of 50S assembly. It makes multiple contacts with different domains of the 23S rRNA in the assembled 50S subunit and ribosome. Its function is as follows. Forms part of the polypeptide exit tunnel. The chain is Large ribosomal subunit protein uL4 from Desulfitobacterium hafniense (strain Y51).